We begin with the raw amino-acid sequence, 299 residues long: Taste receptor type 2 member 5 (299 aa).

A topological domain (extracellular) is located at residue Met1. Residues 2 to 22 form a helical membrane-spanning segment; sequence LSAGLGLLMLVAVVEFLIGLI. The Cytoplasmic segment spans residues 23–45; sequence GNGVLVVWSFREWIRKFSWSSYN. Residues 46–66 form a helical membrane-spanning segment; sequence LIILGLAGCRFVLQWLIILDL. At 67-82 the chain is on the extracellular side; the sequence is SLFPLFQSSRWLRYLS. The helical transmembrane segment at 83-103 threads the bilayer; sequence IFWVLVSQASLWFATFLSVFY. At 104–127 the chain is on the cytoplasmic side; the sequence is CKKITTFDHPAYLWLKQRAYNLSL. The helical transmembrane segment at 128 to 148 threads the bilayer; the sequence is WCLLGYFIINLLLTVQIGLMF. The Extracellular segment spans residues 149 to 175; sequence YHPPQGNSSIRYPFESWQYLYAFRLNS. N-linked (GlcNAc...) asparagine glycosylation is present at Asn155. The chain crosses the membrane as a helical span at residues 176-196; sequence GSYLPLMVFLVSSGMLIVSLY. At 197 to 223 the chain is on the cytoplasmic side; sequence THHKKMKVHSAGRRDVRAKAHITALKS. A helical transmembrane segment spans residues 224-244; sequence LGCFLLLHLVYIMASPFSIAS. At 245 to 253 the chain is on the extracellular side; sequence KTYPPDLTS. The chain crosses the membrane as a helical span at residues 254–274; that stretch reads VFIWETLMAAYPSLHSLILIM. The Cytoplasmic segment spans residues 275-299; it reads GIPRVKQTCQKILWKTVCARRCWGP.

It belongs to the G-protein coupled receptor T2R family.

Its subcellular location is the membrane. In terms of biological role, receptor that may play a role in the perception of bitterness and is gustducin-linked. May play a role in sensing the chemical composition of the gastrointestinal content. The activity of this receptor may stimulate alpha gustducin, mediate PLC-beta-2 activation and lead to the gating of TRPM5. This is Taste receptor type 2 member 5 (TAS2R5) from Pan paniscus (Pygmy chimpanzee).